Here is a 177-residue protein sequence, read N- to C-terminus: Endoribonuclease YbeY (177 aa).

Zn(2+) is bound by residues H114, H118, and H124. Residues 154-177 (SYPEAIPTNPAPRRQASSSAGHIE) are disordered. The segment covering 168 to 177 (QASSSAGHIE) has biased composition (polar residues).

The protein belongs to the endoribonuclease YbeY family. Zn(2+) serves as cofactor.

The protein resides in the cytoplasm. Its function is as follows. Single strand-specific metallo-endoribonuclease involved in late-stage 70S ribosome quality control and in maturation of the 3' terminus of the 16S rRNA. This Cellvibrio japonicus (strain Ueda107) (Pseudomonas fluorescens subsp. cellulosa) protein is Endoribonuclease YbeY.